The primary structure comprises 447 residues: N-succinylarginine dihydrolase (447 aa).

Substrate-binding positions include 19-28 (AGLSFGNEAS), N110, and 137-138 (HR). Residue E174 is part of the active site. Substrate is bound at residue R212. The active site involves H248. Residues D250 and N359 each coordinate substrate. C365 (nucleophile) is an active-site residue.

Belongs to the succinylarginine dihydrolase family. As to quaternary structure, homodimer.

It carries out the reaction N(2)-succinyl-L-arginine + 2 H2O + 2 H(+) = N(2)-succinyl-L-ornithine + 2 NH4(+) + CO2. It functions in the pathway amino-acid degradation; L-arginine degradation via AST pathway; L-glutamate and succinate from L-arginine: step 2/5. In terms of biological role, catalyzes the hydrolysis of N(2)-succinylarginine into N(2)-succinylornithine, ammonia and CO(2). The sequence is that of N-succinylarginine dihydrolase from Salmonella typhimurium (strain LT2 / SGSC1412 / ATCC 700720).